A 281-amino-acid chain; its full sequence is Sorbose reductase SOU1 (281 aa).

NADP(+) is bound by residues Ile-47, Lys-74, and Asn-119. Residues Ser-173 and Tyr-188 each act as proton donor in the active site. 4 residues coordinate NADP(+): Tyr-188, Lys-192, Ile-221, and Thr-223. Lys-192 functions as the Lowers pKa of active site Tyr in the catalytic mechanism.

The protein belongs to the short-chain dehydrogenases/reductases (SDR) family. In terms of assembly, homotetramer.

The catalysed reaction is D-sorbitol + NADP(+) = keto-L-sorbose + NADPH + H(+). It participates in carbohydrate degradation; L-sorbose degradation. Catalyzes the NADP dependent reduction of L-sorbose to D-glucitol. Can also convert fructose to mannitol, but less efficiently. The polypeptide is Sorbose reductase SOU1 (SOU1) (Candida albicans (strain SC5314 / ATCC MYA-2876) (Yeast)).